Consider the following 697-residue polypeptide: Phenoloxidase 1 (697 aa).

A propeptide spans 1-101 (MSDMSGDVVE…PKHQEMATEV (101 aa)) (removed by PPAE1). The Cu cation site is built by His217, His221, and His247. Asn260 and Asn313 each carry an N-linked (GlcNAc...) asparagine glycan. Glu355 acts as the Proton acceptor in catalysis. His370, His374, and His410 together coordinate Cu cation. Asn498 and Asn552 each carry an N-linked (GlcNAc...) asparagine glycan. 2 cysteine pairs are disulfide-bonded: Cys587/Cys631 and Cys589/Cys638.

The protein belongs to the tyrosinase family. Heterodimer. Cu(2+) serves as cofactor. Post-translationally, activated by the cleavage of the N-terminal propeptide by PPAE1. In terms of tissue distribution, expressed in hemocytes.

The protein resides in the secreted. It carries out the reaction L-tyrosine + O2 = L-dopaquinone + H2O. It catalyses the reaction 2 L-dopa + O2 = 2 L-dopaquinone + 2 H2O. With respect to regulation, activated by a cationic detergent cetyl pyridinium chloride (CPC). Inhibited by phenyl thio-urea (PTU). Its function is as follows. This is a copper-containing oxidase that functions in the formation of pigments such as melanins and other polyphenolic compounds. Catalyzes the rate-limiting conversions of tyrosine to DOPA, DOPA to DOPA-quinone and possibly 5,6 dihydroxyindole to indole-5'6 quinone. Catalyzes the oxidation of 4-methylcatechol. Binds to the surface of hemocytes and is involved in hemocyte melanization. The protein is Phenoloxidase 1 of Spodoptera litura (Asian cotton leafworm).